The following is a 349-amino-acid chain: Bifunctional protein FolKE (349 aa).

The tract at residues 1-226 (MQTTYLSMGS…LFEIDSSKND (226 aa)) is 2-amino-4-hydroxy-6-hydroxymethyldihydropteridine pyrophosphokinase. The tract at residues 226–349 (DSIVLIKDIP…KRMEFLESLL (124 aa)) is GTP cyclohydrolase 1.

This sequence in the N-terminal section; belongs to the HPPK family. It in the C-terminal section; belongs to the GTP cyclohydrolase I family. As to quaternary structure, homomer.

It catalyses the reaction 6-hydroxymethyl-7,8-dihydropterin + ATP = (7,8-dihydropterin-6-yl)methyl diphosphate + AMP + H(+). The enzyme catalyses GTP + H2O = 7,8-dihydroneopterin 3'-triphosphate + formate + H(+). It functions in the pathway cofactor biosynthesis; 7,8-dihydroneopterin triphosphate biosynthesis; 7,8-dihydroneopterin triphosphate from GTP: step 1/1. It participates in cofactor biosynthesis; tetrahydrofolate biosynthesis; 2-amino-4-hydroxy-6-hydroxymethyl-7,8-dihydropteridine diphosphate from 7,8-dihydroneopterin triphosphate: step 4/4. This chain is Bifunctional protein FolKE (folKE), found in Lactococcus lactis subsp. cremoris (strain MG1363).